The following is a 124-amino-acid chain: Fluoride-specific ion channel FluC 1 (124 aa).

4 consecutive transmembrane segments (helical) span residues 7–27, 35–55, 63–83, and 101–121; these read ALTL…GGWV, FPWG…LLQG, LLLV…TLML, and IVGT…AGAW.

The protein belongs to the fluoride channel Fluc/FEX (TC 1.A.43) family.

It localises to the cell membrane. The catalysed reaction is fluoride(in) = fluoride(out). Fluoride-specific ion channel. Important for reducing fluoride concentration in the cell, thus reducing its toxicity. The sequence is that of Fluoride-specific ion channel FluC 1 from Rubrobacter xylanophilus (strain DSM 9941 / JCM 11954 / NBRC 16129 / PRD-1).